Consider the following 131-residue polypeptide: Methyl-coenzyme M reductase operon protein D (131 aa).

In terms of assembly, MCR is composed of three subunits: alpha, beta, and gamma. The function of proteins C and D is not known.

The protein is Methyl-coenzyme M reductase operon protein D (mcrD) of Methanothermus fervidus.